We begin with the raw amino-acid sequence, 457 residues long: Chromosomal replication initiator protein DnaA (457 aa).

The tract at residues 1–90 is domain I, interacts with DnaA modulators; the sequence is MAVSLWQQCI…RPSAKPQAPA (90 aa). Residues 79 to 120 form a disordered region; the sequence is GSRPSAKPQAPAPAAVKAAAPQPKPGNSFVSQPEPAVSNHRS. Over residues 84 to 99 the composition is skewed to low complexity; the sequence is AKPQAPAPAAVKAAAP. The interval 91-120 is domain II; the sequence is PAAVKAAAPQPKPGNSFVSQPEPAVSNHRS. The domain III, AAA+ region stretch occupies residues 121-337; sequence NINPTYQFDN…GALNRVIANA (217 aa). ATP is bound by residues glycine 165, glycine 167, lysine 168, and threonine 169. Residues 338 to 457 are domain IV, binds dsDNA; sequence NFTGRPITID…YANLIRTLSS (120 aa).

This sequence belongs to the DnaA family. In terms of assembly, oligomerizes as a right-handed, spiral filament on DNA at oriC.

It is found in the cytoplasm. Functionally, plays an essential role in the initiation and regulation of chromosomal replication. ATP-DnaA binds to the origin of replication (oriC) to initiate formation of the DNA replication initiation complex once per cell cycle. Binds the DnaA box (a 9 base pair repeat at the origin) and separates the double-stranded (ds)DNA. Forms a right-handed helical filament on oriC DNA; dsDNA binds to the exterior of the filament while single-stranded (ss)DNA is stabiized in the filament's interior. The ATP-DnaA-oriC complex binds and stabilizes one strand of the AT-rich DNA unwinding element (DUE), permitting loading of DNA polymerase. After initiation quickly degrades to an ADP-DnaA complex that is not apt for DNA replication. Binds acidic phospholipids. This Shewanella amazonensis (strain ATCC BAA-1098 / SB2B) protein is Chromosomal replication initiator protein DnaA.